Here is a 257-residue protein sequence, read N- to C-terminus: ATP synthase subunit a (257 aa).

A propeptide spans 1 to 8 (removed in mature form); that stretch reads MRHLDFVL. The next 7 membrane-spanning stretches (helical) occupy residues 34-54, 93-113, 122-142, 149-169, 187-207, 210-230, and 231-251; these read LTNIGLYLTISIFLILTYSLL, FFPLMYVLFIFILVNNLIGLV, HFILTFSISFTVVLGATILGF, FFSLFVPSGCPLALLPLLVLI, ANILSGHMLLSILSGFTYNIM, GIIFFILGLIPLAFIIAFSGL, and ELAIAFIQAQVFVVLACSYIK.

This sequence belongs to the ATPase A chain family. In terms of assembly, F-type ATPases have 2 components, CF(1) - the catalytic core - and CF(0) - the membrane proton channel. CF(1) has five subunits: alpha(3), beta(3), gamma(1), delta(1), epsilon(1). CF(0) has three main subunits: a, b and c.

The protein resides in the mitochondrion inner membrane. In terms of biological role, mitochondrial membrane ATP synthase (F(1)F(0) ATP synthase or Complex V) produces ATP from ADP in the presence of a proton gradient across the membrane which is generated by electron transport complexes of the respiratory chain. F-type ATPases consist of two structural domains, F(1) - containing the extramembraneous catalytic core and F(0) - containing the membrane proton channel, linked together by a central stalk and a peripheral stalk. During catalysis, ATP synthesis in the catalytic domain of F(1) is coupled via a rotary mechanism of the central stalk subunits to proton translocation. Key component of the proton channel; it may play a direct role in the translocation of protons across the membrane. The chain is ATP synthase subunit a (atp6) from Penicillium chrysogenum (Penicillium notatum).